Reading from the N-terminus, the 151-residue chain is Putative pre-16S rRNA nuclease (151 aa).

It belongs to the YqgF nuclease family.

Its subcellular location is the cytoplasm. In terms of biological role, could be a nuclease involved in processing of the 5'-end of pre-16S rRNA. In Neisseria meningitidis serogroup B (strain ATCC BAA-335 / MC58), this protein is Putative pre-16S rRNA nuclease.